Here is a 301-residue protein sequence, read N- to C-terminus: D-alanine--D-alanine ligase (301 aa).

Residues 102–295 form the ATP-grasp domain; that stretch reads KAVFAAAGLP…FPALCAWMVE (194 aa). 128–181 provides a ligand contact to ATP; sequence PLPRPYVIKPVNEGSSVGVFILREGDNRRADIARAWRHGSVAMTEEYVPGRELT. The Mg(2+) site is built by Asp-248, Glu-262, and Asn-264.

The protein belongs to the D-alanine--D-alanine ligase family. The cofactor is Mg(2+). It depends on Mn(2+) as a cofactor.

The protein localises to the cytoplasm. The enzyme catalyses 2 D-alanine + ATP = D-alanyl-D-alanine + ADP + phosphate + H(+). The protein operates within cell wall biogenesis; peptidoglycan biosynthesis. Cell wall formation. This Acidiphilium cryptum (strain JF-5) protein is D-alanine--D-alanine ligase.